Consider the following 450-residue polypeptide: MRECISVHIGQAGIQVGNACWELYCLEHGIQPDGQVPGDKTAGHHDDAFSTFFSQTGAGKHVPRAIFVDLEPTVIDEVRTGTYRQLFHPEQLISGKEDAANNFARGHYTIGKEIVDLCLDRIRKLADNCTGLQGFLVFNAVGGGTGSGLGSLLLERLSVEYGKKSKLGFTVYPSPQVSTSVVEPYNSVLSTHSLLEHTDVSILLDNEAIYDICRRSLDIERPNYSNLNRLVSQVISSLTASLRFDGALNVDVNEFQTNLVPYPRIHFMLSSYAPVISSAKAFHEQLSVAEITSSAFEPASMMVKCDPRHGKYMACCLMYRGDVVPKDVNAAVATIKTKRTIQFVDWCPTGFKCGINYQAPTVVPGADLAKVQRAVCMISNSTSVVEVFSRINSKFDLMYAKRAFVHWYVGEGMEEGEFSEAREDLAALEKDYEEVAAEGGSDDGDEEEEY.

Gln11 serves as a coordination point for GTP. Lys40 carries the post-translational modification N6-acetyllysine. Residues Glu71, Gly144, Thr145, Thr179, Asn206, and Asn228 each contribute to the GTP site. Residue Glu71 coordinates Mg(2+). The active site involves Glu254.

The protein belongs to the tubulin family. In terms of assembly, dimer of alpha and beta chains. A typical microtubule is a hollow water-filled tube with an outer diameter of 25 nm and an inner diameter of 15 nM. Alpha-beta heterodimers associate head-to-tail to form protofilaments running lengthwise along the microtubule wall with the beta-tubulin subunit facing the microtubule plus end conferring a structural polarity. Microtubules usually have 13 protofilaments but different protofilament numbers can be found in some organisms and specialized cells. It depends on Mg(2+) as a cofactor. Undergoes a tyrosination/detyrosination cycle, the cyclic removal and re-addition of a C-terminal tyrosine residue by the enzymes tubulin tyrosine carboxypeptidase (TTCP) and tubulin tyrosine ligase (TTL), respectively. Post-translationally, acetylation of alpha chains at Lys-40 stabilizes microtubules and affects affinity and processivity of microtubule motors. This modification has a role in multiple cellular functions, ranging from cell motility, cell cycle progression or cell differentiation to intracellular trafficking and signaling.

The protein localises to the cytoplasm. It localises to the cytoskeleton. The catalysed reaction is GTP + H2O = GDP + phosphate + H(+). Functionally, tubulin is the major constituent of microtubules, a cylinder consisting of laterally associated linear protofilaments composed of alpha- and beta-tubulin heterodimers. Microtubules grow by the addition of GTP-tubulin dimers to the microtubule end, where a stabilizing cap forms. Below the cap, tubulin dimers are in GDP-bound state, owing to GTPase activity of alpha-tubulin. This is Tubulin alpha-3 chain (TUBA3) from Zea mays (Maize).